We begin with the raw amino-acid sequence, 115 residues long: Putative membrane protein insertion efficiency factor (115 aa).

Positions 81 to 115 are disordered; that stretch reads DPRPGRCGCKDAGPAVSAGSTEGNPGRRTDGTDPD. Residues 105-115 show a composition bias toward basic and acidic residues; sequence PGRRTDGTDPD.

It belongs to the UPF0161 family.

It localises to the cell inner membrane. Functionally, could be involved in insertion of integral membrane proteins into the membrane. This is Putative membrane protein insertion efficiency factor from Rhodospirillum rubrum (strain ATCC 11170 / ATH 1.1.1 / DSM 467 / LMG 4362 / NCIMB 8255 / S1).